A 306-amino-acid chain; its full sequence is MQTRSSSSPSANHRRETQLQIADPTSFCGKIMPGWTVVNRPRSSNNGVVDTYFIEPGTGRQFSSLEAIHRHLAGEVNDRRLTRAGSFFQDKTRVYEGSRTKQDHCGVEYASKGFRLPRGWSVEEVPRKNSHYIDKYYVERKTGKRFRSLVSVERYLRESRNSIEQQLRVLQNRRGHSKDFRLPDGWIVEEKPRRSSSHIDRSYIEPGTGNKFRSMAAVERYLISVGNITLDSVSMVHSERLPLLMNRNGIRFQSEVIDPNPPKKVKWVLTGSGGNMFTANVRGSNVSSLVKHTWSEAFVSLIEDRS.

Residues 1–11 (MQTRSSSSPSA) show a composition bias toward polar residues. A disordered region spans residues 1–21 (MQTRSSSSPSANHRRETQLQI). 3 consecutive MBD domains span residues 21–92 (IADP…QDKT), 106–171 (GVEY…RVLQ), and 172–242 (NRRG…ERLP). Asymmetric dimethylarginine occurs at positions 118, 145, and 174. The segment at 163–306 (IEQQLRVLQN…AFVSLIEDRS (144 aa)) is required for interaction with PRMT11.

In terms of assembly, interacts with PRMT11. Interacts (via C-terminus) with IDM2, but not with IDM1. Interacts with IDM3. Part of a complex made of MBD7, IDM1, IDM2 and IDM3. In terms of processing, methylated by PRMT11. As to expression, expressed in leaves, buds, flowers, stems, siliques, mature seeds and roots.

It is found in the nucleus. Its subcellular location is the chromosome. Functionally, transcriptional regulator that binds CpG islands in promoters where the DNA is methylated at position 5 of cytosine within CpG dinucleotides. May directly affect chromatin structure by inducing intra- and inter- chromatin compaction via bridging over multiple methylated CpG sites. Acts as an anti-silencing factor that prevents DNA hypermethylation and gene repression. Requires high mCG density for binding. Recognizes preferentially mCGs located in transposable elements. Required for active DNA demethylation. Prefers to target genomic loci around chromocenters. This Arabidopsis thaliana (Mouse-ear cress) protein is Methyl-CpG-binding domain-containing protein 7.